The sequence spans 36 residues: U4-ctenitoxin-Pr1a (36 aa).

3 cysteine pairs are disulfide-bonded: C3/C17, C10/C22, and C16/C34.

As to expression, expressed by the venom gland.

The protein localises to the secreted. Neurotoxin. Causes spastic paralysis and death in mice. Moderate inhibitor of L-type calcium channels (Cav1/CACNA1). This Phoneutria reidyi (Brazilian Amazonian armed spider) protein is U4-ctenitoxin-Pr1a.